Reading from the N-terminus, the 525-residue chain is GMP synthase [glutamine-hydrolyzing] (525 aa).

The Glutamine amidotransferase type-1 domain occupies 9–207 (RILILDFGSQ…VRDICQCEAL (199 aa)). C86 (nucleophile) is an active-site residue. Active-site residues include H181 and E183. A GMPS ATP-PPase domain is found at 208–400 (WTPAKIIDDA…LGLPYDMLYR (193 aa)). 235-241 (SGGVDSS) provides a ligand contact to ATP.

As to quaternary structure, homodimer.

It carries out the reaction XMP + L-glutamine + ATP + H2O = GMP + L-glutamate + AMP + diphosphate + 2 H(+). It functions in the pathway purine metabolism; GMP biosynthesis; GMP from XMP (L-Gln route): step 1/1. Catalyzes the synthesis of GMP from XMP. The chain is GMP synthase [glutamine-hydrolyzing] from Salmonella paratyphi B (strain ATCC BAA-1250 / SPB7).